A 431-amino-acid polypeptide reads, in one-letter code: MGLSLRVRRRGGSVSKKEIIPVTSCSEEVEITIPSQFQCPISYELMKDPVIIASGITYDRENIEKWFESGYQTCPVTNTVLTSLEQIPNHTIRRMIQGWCGSSLGGGIERIPTPRVPVTSHQVSEICERLSAATRRGDYAACMEMVTKMTRLGKESERNRKCVKENGAGLVLCVCFDAFSENANASLLLEETVSVLTWMLPIGLEGQSKLTTTSSFNRLVELLRNGDQNAAFLIKELLELNVTHVHALTKINGVQEAFMKSINRDSTCVNSLISIHHMILTNQETVSRFLELDLVNITVEMLVDSENSVCEKALTVLNVICETKEGREKVRRNKLVIPILVKKILKISEKKDLVSVMWKVCKSGDGSEVEEALRLGAFKKLVVMLQVGCGEGTKEKVTELLKMMNKVMKMNGFVDRSYSSSIEFKHVKKPF.

In terms of domain architecture, U-box spans 32 to 106 (TIPSQFQCPI…QGWCGSSLGG (75 aa)).

It carries out the reaction S-ubiquitinyl-[E2 ubiquitin-conjugating enzyme]-L-cysteine + [acceptor protein]-L-lysine = [E2 ubiquitin-conjugating enzyme]-L-cysteine + N(6)-ubiquitinyl-[acceptor protein]-L-lysine.. It participates in protein modification; protein ubiquitination. Functionally, functions as an E3 ubiquitin ligase. This is U-box domain-containing protein 20 (PUB20) from Arabidopsis thaliana (Mouse-ear cress).